Here is a 40-residue protein sequence, read N- to C-terminus: Ice-structuring protein GS-8 (40 aa).

Blocked amino end (Met) is present on Met1.

It belongs to the type-I AFP family.

Antifreeze proteins lower the blood freezing point. The sequence is that of Ice-structuring protein GS-8 from Myoxocephalus aenaeus (Grubby sculpin).